A 680-amino-acid chain; its full sequence is Tumor protein 63 (680 aa).

The tract at residues Met1–Met107 is transcription activation. Positions Gln123–Asp157 are enriched in polar residues. Residues Gln123–Tyr171 form a disordered region. Residues Asp170 to Gln362 mediate DNA binding. Zn(2+) contacts are provided by Cys244, His247, Cys308, and Cys312. The span at Asp351–Arg360 shows a compositional bias: basic and acidic residues. Disordered regions lie at residues Asp351 to Arg393 and Tyr435 to Met472. Residues Arg352–Thr388 are interaction with HIPK2. Polar residues-rich tracts occupy residues Lys361–Gly371 and Arg379–Ser389. An oligomerization region spans residues Arg394 to His443. Residues Gln437–Gln450 are compositionally biased toward low complexity. A compositionally biased stretch (polar residues) spans Thr451–Met472. The SAM domain occupies Pro541–Leu607. The interval Phe610–Glu680 is transactivation inhibition. A Glycyl lysine isopeptide (Lys-Gly) (interchain with G-Cter in SUMO) cross-link involves residue Lys676.

This sequence belongs to the p53 family. Binds DNA as a homotetramer. Isoform composition of the tetramer may determine transactivation activity. Isoforms Alpha and Gamma interact with HIPK2. Interacts with SSRP1, leading to stimulate coactivator activity. Isoform 1 and isoform 2 interact with WWP1. Interacts with PDS5A. Isoform 5 (via activation domain) interacts with NOC2L. The cofactor is Zn(2+). Post-translationally, may be sumoylated. In terms of processing, ubiquitinated. Polyubiquitination involves WWP1 and leads to proteasomal degradation of this protein. In terms of tissue distribution, widely expressed, notably in heart, kidney, placenta, prostate, skeletal muscle, testis and thymus, although the precise isoform varies according to tissue type. Progenitor cell layers of skin, breast, eye and prostate express high levels of DeltaN-type isoforms. Isoform 10 is predominantly expressed in skin squamous cell carcinomas, but not in normal skin tissues.

Its subcellular location is the nucleus. In terms of biological role, acts as a sequence specific DNA binding transcriptional activator or repressor. The isoforms contain a varying set of transactivation and auto-regulating transactivation inhibiting domains thus showing an isoform specific activity. Isoform 2 activates RIPK4 transcription. May be required in conjunction with TP73/p73 for initiation of p53/TP53 dependent apoptosis in response to genotoxic insults and the presence of activated oncogenes. Involved in Notch signaling by probably inducing JAG1 and JAG2. Plays a role in the regulation of epithelial morphogenesis. The ratio of DeltaN-type and TA*-type isoforms may govern the maintenance of epithelial stem cell compartments and regulate the initiation of epithelial stratification from the undifferentiated embryonal ectoderm. Required for limb formation from the apical ectodermal ridge. Activates transcription of the p21 promoter. In Homo sapiens (Human), this protein is Tumor protein 63 (TP63).